We begin with the raw amino-acid sequence, 586 residues long: Putative ABC transporter ATP-binding protein MG187 homolog (586 aa).

Residues 13–464 (IEFKNIVVDF…PANEFVATFL (452 aa)) form the ABC transporter domain. 45–52 (GPSGCGKT) is an ATP binding site.

This sequence belongs to the ABC transporter superfamily.

The polypeptide is Putative ABC transporter ATP-binding protein MG187 homolog (Mycoplasma pneumoniae (strain ATCC 29342 / M129 / Subtype 1) (Mycoplasmoides pneumoniae)).